A 389-amino-acid polypeptide reads, in one-letter code: S-adenosylmethionine synthase (389 aa).

H16 is a binding site for ATP. Mg(2+) is bound at residue D18. E44 is a K(+) binding site. Positions 57 and 101 each coordinate L-methionine. The interval 101–111 (QSVDIAQGVNE) is flexible loop. ATP-binding positions include 168 to 170 (DAK), 234 to 235 (RF), D243, 249 to 250 (RK), A266, and K270. L-methionine is bound at residue D243. K274 serves as a coordination point for L-methionine.

This sequence belongs to the AdoMet synthase family. In terms of assembly, homotetramer; dimer of dimers. The cofactor is Mg(2+). K(+) is required as a cofactor.

Its subcellular location is the cytoplasm. It catalyses the reaction L-methionine + ATP + H2O = S-adenosyl-L-methionine + phosphate + diphosphate. The protein operates within amino-acid biosynthesis; S-adenosyl-L-methionine biosynthesis; S-adenosyl-L-methionine from L-methionine: step 1/1. Catalyzes the formation of S-adenosylmethionine (AdoMet) from methionine and ATP. The overall synthetic reaction is composed of two sequential steps, AdoMet formation and the subsequent tripolyphosphate hydrolysis which occurs prior to release of AdoMet from the enzyme. The polypeptide is S-adenosylmethionine synthase (Magnetococcus marinus (strain ATCC BAA-1437 / JCM 17883 / MC-1)).